The sequence spans 191 residues: Pyridoxal 5'-phosphate synthase subunit PdxT (191 aa).

Position 48 to 50 (48 to 50 (GES)) interacts with L-glutamine. Residue cysteine 81 is the Nucleophile of the active site. Residues arginine 109 and 136–137 (IR) each bind L-glutamine. Active-site charge relay system residues include histidine 172 and glutamate 174.

Belongs to the glutaminase PdxT/SNO family. In the presence of PdxS, forms a dodecamer of heterodimers. Only shows activity in the heterodimer.

The enzyme catalyses aldehydo-D-ribose 5-phosphate + D-glyceraldehyde 3-phosphate + L-glutamine = pyridoxal 5'-phosphate + L-glutamate + phosphate + 3 H2O + H(+). It catalyses the reaction L-glutamine + H2O = L-glutamate + NH4(+). Its pathway is cofactor biosynthesis; pyridoxal 5'-phosphate biosynthesis. Catalyzes the hydrolysis of glutamine to glutamate and ammonia as part of the biosynthesis of pyridoxal 5'-phosphate. The resulting ammonia molecule is channeled to the active site of PdxS. This Thermus thermophilus (strain ATCC 27634 / DSM 579 / HB8) protein is Pyridoxal 5'-phosphate synthase subunit PdxT.